Consider the following 598-residue polypeptide: Potassium voltage-gated channel subfamily A member 5 (598 aa).

A disordered region spans residues 1–89 (MEIALGPLEN…EEGEGDPGLS (89 aa)). The tetramerization domain stretch occupies residues 1-195 (MEIALGPLEN…FYQLGDEAME (195 aa)). At 1 to 231 (MEIALGPLEN…LIFEYPESSG (231 aa)) the chain is on the cytoplasmic side. Positions 60 to 69 (RPLPPQPPEL) are enriched in pro residues. Lys-205 participates in a covalent cross-link: Glycyl lysine isopeptide (Lys-Gly) (interchain with G-Cter in SUMO). Residues 232 to 253 (SARAIAIVSVLVILISIITFCL) form a helical membrane-spanning segment. The Extracellular portion of the chain corresponds to 254–308 (ETLPEFKDERELLRHPPVPHQPPAAPALGANGSGAVAPASGSTVAPLLPRTLADP). The helical transmembrane segment at 309–330 (FFIVETTCVIWFTFELLVRFFA) threads the bilayer. Cys-331 carries the S-palmitoyl cysteine lipid modification. Residues 331–341 (CPSKAEFSRNI) are Cytoplasmic-facing. Residues 342 to 362 (MNIIDIVAIFPYFITLGTELA) traverse the membrane as a helical segment. Over 363–380 (EQQPGGGGGGQNGQQAMS) the chain is Extracellular. Residues 381 to 401 (LAILRVIRLVRVFRIFKLSRH) traverse the membrane as a helical; Voltage-sensor segment. The Cytoplasmic segment spans residues 402 to 416 (SKGLQILGKTLQASM). Positions 403 to 416 (KGLQILGKTLQASM) are S4-S5 linker. Residues 417 to 438 (RELGLLIFFLFIGVILFSSAVY) form a helical membrane-spanning segment. At 439–452 (FAEADNQGTHFSSI) the chain is on the extracellular side. The segment at residues 453-464 (PDAFWWAVVTMT) is an intramembrane region (helical). The Selectivity filter motif lies at 465-470 (TVGYGD). An intramembrane segment occupies 465–472 (TVGYGDMR). A helical transmembrane segment spans residues 480–508 (IVGSLCAIAGVLTIALPVPVIVSNFNYFY). Topologically, residues 509 to 598 (HRETDHEEQA…CLDTSRETDL (90 aa)) are cytoplasmic. Positions 517 to 539 (QAALKEEPGSQSRGTSLDAGGQR) are disordered. A Glycyl lysine isopeptide (Lys-Gly) (interchain with G-Cter in SUMO) cross-link involves residue Lys-521. Residues 596–598 (TDL) carry the PDZ-binding motif.

Belongs to the potassium channel family. A (Shaker) (TC 1.A.1.2) subfamily. Kv1.5/KCNA5 sub-subfamily. As to quaternary structure, homotetramer and heterotetramer of potassium channel proteins. Interacts with DLG1, which enhances channel currents. Forms a ternary complex with DLG1 and CAV3. Interacts with KCNAB1. Interacts with UBE2I. Interacts with XIRP2; the interaction is required for normal action potential configuration in the heart. Post-translationally, glycosylated. In terms of processing, sumoylated on Lys-205, and Lys-521, preferentially with SUMO3. Sumoylation regulates the voltage sensitivity of the channel.

The protein resides in the cell membrane. It carries out the reaction K(+)(in) = K(+)(out). In terms of biological role, voltage-gated potassium channel that mediates transmembrane potassium transport in excitable membranes. Forms tetrameric potassium-selective channels through which potassium ions pass in accordance with their electrochemical gradient. The channel alternates between opened and closed conformations in response to the voltage difference across the membrane. Can form functional homotetrameric channels and heterotetrameric channels that contain variable proportions of KCNA1, KCNA2, KCNA4, KCNA5, and possibly other family members as well; channel properties depend on the type of alpha subunits that are part of the channel. Channel properties are modulated by cytoplasmic beta subunits that regulate the subcellular location of the alpha subunits and promote rapid inactivation. Homotetrameric channels display rapid activation and slow inactivation. Required for normal electrical conduction including formation of the infranodal ventricular conduction system and normal action potential configuration, as a result of its interaction with XIRP2. May play a role in regulating the secretion of insulin in normal pancreatic islets. The polypeptide is Potassium voltage-gated channel subfamily A member 5 (KCNA5) (Oryctolagus cuniculus (Rabbit)).